A 264-amino-acid chain; its full sequence is Molybdenum transport system permease protein ModB (264 aa).

Transmembrane regions (helical) follow at residues 11-31 (VYLP…AIAI), 57-77 (TAAA…LVLA), 90-110 (LILL…LYAF), 127-147 (IAFS…PYLV), 176-196 (WWRV…VLAF), and 234-254 (AAVA…LGVG). Residues 51–253 (LLLSVKTAAA…VVAALVVLGV (203 aa)) enclose the ABC transmembrane type-1 domain.

It belongs to the binding-protein-dependent transport system permease family. CysTW subfamily.

It localises to the cell membrane. In terms of biological role, part of the binding-protein-dependent transport system ModABCD for molybdenum; probably responsible for the translocation of the substrate across the membrane. The polypeptide is Molybdenum transport system permease protein ModB (modB) (Mycobacterium bovis (strain ATCC BAA-935 / AF2122/97)).